We begin with the raw amino-acid sequence, 465 residues long: Cysteine--tRNA ligase (465 aa).

Zn(2+) is bound at residue C27. Residues 29-39 (PTVYDDAHLGH) carry the 'HIGH' region motif. Zn(2+) contacts are provided by C207, H237, and E241. A 'KMSKS' region motif is present at residues 269 to 273 (KMSKS). Position 272 (K272) interacts with ATP.

This sequence belongs to the class-I aminoacyl-tRNA synthetase family. As to quaternary structure, monomer. It depends on Zn(2+) as a cofactor.

It localises to the cytoplasm. The catalysed reaction is tRNA(Cys) + L-cysteine + ATP = L-cysteinyl-tRNA(Cys) + AMP + diphosphate. The sequence is that of Cysteine--tRNA ligase (cysS) from Helicobacter pylori (strain J99 / ATCC 700824) (Campylobacter pylori J99).